Consider the following 239-residue polypeptide: Phosphoribosylaminoimidazole-succinocarboxamide synthase (239 aa).

The protein belongs to the SAICAR synthetase family.

It carries out the reaction 5-amino-1-(5-phospho-D-ribosyl)imidazole-4-carboxylate + L-aspartate + ATP = (2S)-2-[5-amino-1-(5-phospho-beta-D-ribosyl)imidazole-4-carboxamido]succinate + ADP + phosphate + 2 H(+). Its pathway is purine metabolism; IMP biosynthesis via de novo pathway; 5-amino-1-(5-phospho-D-ribosyl)imidazole-4-carboxamide from 5-amino-1-(5-phospho-D-ribosyl)imidazole-4-carboxylate: step 1/2. The protein is Phosphoribosylaminoimidazole-succinocarboxamide synthase of Acinetobacter baylyi (strain ATCC 33305 / BD413 / ADP1).